The primary structure comprises 600 residues: UvrABC system protein C (600 aa).

Positions 15–92 (EKAGCYLMKD…IKKYQPYYNV (78 aa)) constitute a GIY-YIG domain. One can recognise a UVR domain in the interval 197 to 232 (QEVKKDLTNKMLQASADLEFERAGELRDQLKYIEET).

Belongs to the UvrC family. Interacts with UvrB in an incision complex.

The protein localises to the cytoplasm. Its function is as follows. The UvrABC repair system catalyzes the recognition and processing of DNA lesions. UvrC both incises the 5' and 3' sides of the lesion. The N-terminal half is responsible for the 3' incision and the C-terminal half is responsible for the 5' incision. This is UvrABC system protein C from Lactobacillus delbrueckii subsp. bulgaricus (strain ATCC BAA-365 / Lb-18).